The chain runs to 254 residues: CRISPR-associated endonuclease Cas1 (254 aa).

Residues Glu78, His146, and Glu161 each contribute to the Mn(2+) site.

Belongs to the CRISPR-associated endonuclease Cas1 family. As to quaternary structure, homodimer, forms a heterotetramer with a Cas2 homodimer. It depends on Mg(2+) as a cofactor. Requires Mn(2+) as cofactor.

In terms of biological role, CRISPR (clustered regularly interspaced short palindromic repeat), is an adaptive immune system that provides protection against mobile genetic elements (viruses, transposable elements and conjugative plasmids). CRISPR clusters contain spacers, sequences complementary to antecedent mobile elements, and target invading nucleic acids. CRISPR clusters are transcribed and processed into CRISPR RNA (crRNA). Acts as a dsDNA endonuclease. Involved in the integration of spacer DNA into the CRISPR cassette. The polypeptide is CRISPR-associated endonuclease Cas1 (Leptospira interrogans serogroup Icterohaemorrhagiae serovar Lai (strain 56601)).